Reading from the N-terminus, the 149-residue chain is Transcriptional repressor NrdR (149 aa).

A zinc finger lies at 3 to 34 (CPFCSENDTKVIDSRLVADGHQVRRRRQCLAC). The ATP-cone domain occupies 49 to 139 (PKVIKSNGNR…VYRSFEDIRE (91 aa)).

Belongs to the NrdR family. Requires Zn(2+) as cofactor.

In terms of biological role, negatively regulates transcription of bacterial ribonucleotide reductase nrd genes and operons by binding to NrdR-boxes. This is Transcriptional repressor NrdR from Vibrio vulnificus (strain YJ016).